We begin with the raw amino-acid sequence, 270 residues long: ATP synthase subunit a (270 aa).

The next 5 helical transmembrane spans lie at 37–57 (NVHI…LGVF), 98–118 (IAPL…MDLV), 143–163 (DVNI…YYSI), 208–228 (LFGN…MLPW), and 239–259 (AIFH…LTIV).

This sequence belongs to the ATPase A chain family. As to quaternary structure, F-type ATPases have 2 components, CF(1) - the catalytic core - and CF(0) - the membrane proton channel. CF(1) has five subunits: alpha(3), beta(3), gamma(1), delta(1), epsilon(1). CF(0) has three main subunits: a(1), b(2) and c(9-12). The alpha and beta chains form an alternating ring which encloses part of the gamma chain. CF(1) is attached to CF(0) by a central stalk formed by the gamma and epsilon chains, while a peripheral stalk is formed by the delta and b chains.

The protein localises to the cell inner membrane. Functionally, key component of the proton channel; it plays a direct role in the translocation of protons across the membrane. This Vibrio cholerae serotype O1 (strain ATCC 39315 / El Tor Inaba N16961) protein is ATP synthase subunit a.